The following is a 256-amino-acid chain: Deoxyribose-phosphate aldolase (256 aa).

Aspartate 102 serves as the catalytic Proton donor/acceptor. Lysine 165 (schiff-base intermediate with acetaldehyde) is an active-site residue. The Proton donor/acceptor role is filled by lysine 197.

Belongs to the DeoC/FbaB aldolase family. DeoC type 2 subfamily.

It is found in the cytoplasm. The catalysed reaction is 2-deoxy-D-ribose 5-phosphate = D-glyceraldehyde 3-phosphate + acetaldehyde. Its pathway is carbohydrate degradation; 2-deoxy-D-ribose 1-phosphate degradation; D-glyceraldehyde 3-phosphate and acetaldehyde from 2-deoxy-alpha-D-ribose 1-phosphate: step 2/2. Functionally, catalyzes a reversible aldol reaction between acetaldehyde and D-glyceraldehyde 3-phosphate to generate 2-deoxy-D-ribose 5-phosphate. This is Deoxyribose-phosphate aldolase from Shewanella baltica (strain OS223).